A 146-amino-acid chain; its full sequence is Hemoglobin subunit beta (146 aa).

Positions 2-146 constitute a Globin domain; that stretch reads QWAAEEKQLI…VAHALARKYH (145 aa). Histidine 63 and histidine 92 together coordinate heme b.

This sequence belongs to the globin family. In terms of assembly, heterotetramer of two alpha chains and two beta chains. Red blood cells.

In terms of biological role, involved in oxygen transport from the lung to the various peripheral tissues. In Accipiter gentilis (Northern goshawk), this protein is Hemoglobin subunit beta (HBB).